A 453-amino-acid polypeptide reads, in one-letter code: Glutamyl-tRNA(Gln) amidotransferase subunit A (453 aa).

Residues Lys53 and Ser128 each act as charge relay system in the active site. Ser152 functions as the Acyl-ester intermediate in the catalytic mechanism.

Belongs to the amidase family. GatA subfamily. Heterotrimer of A, B and C subunits.

It catalyses the reaction L-glutamyl-tRNA(Gln) + L-glutamine + ATP + H2O = L-glutaminyl-tRNA(Gln) + L-glutamate + ADP + phosphate + H(+). Functionally, allows the formation of correctly charged Gln-tRNA(Gln) through the transamidation of misacylated Glu-tRNA(Gln) in organisms which lack glutaminyl-tRNA synthetase. The reaction takes place in the presence of glutamine and ATP through an activated gamma-phospho-Glu-tRNA(Gln). This chain is Glutamyl-tRNA(Gln) amidotransferase subunit A, found in Helicobacter pylori (strain G27).